The chain runs to 270 residues: Phosphatidylglycerol--prolipoprotein diacylglyceryl transferase (270 aa).

The next 4 membrane-spanning stretches (helical) occupy residues 19–39 (FPVYWYGIIIGTGVLLGLWLA), 56–76 (LVLIAVPIAILFARMYYVIFE), 92–112 (QGGLAIHGGLIGAVITGVLFA), and 116–136 (GLSFWKLADIAAPSILLGQAI). R138 contributes to the a 1,2-diacyl-sn-glycero-3-phospho-(1'-sn-glycerol) binding site. 3 consecutive transmembrane segments (helical) span residues 178–198 (HPTFLYESLWNFAGVILLLAL), 206–226 (GELFFTYLIWYSVGRFFVEGL), and 236–256 (LRIAQVMSIGLVVISIIFIIV).

This sequence belongs to the Lgt family.

It localises to the cell membrane. The enzyme catalyses L-cysteinyl-[prolipoprotein] + a 1,2-diacyl-sn-glycero-3-phospho-(1'-sn-glycerol) = an S-1,2-diacyl-sn-glyceryl-L-cysteinyl-[prolipoprotein] + sn-glycerol 1-phosphate + H(+). Its pathway is protein modification; lipoprotein biosynthesis (diacylglyceryl transfer). Its function is as follows. Catalyzes the transfer of the diacylglyceryl group from phosphatidylglycerol to the sulfhydryl group of the N-terminal cysteine of a prolipoprotein, the first step in the formation of mature lipoproteins. The chain is Phosphatidylglycerol--prolipoprotein diacylglyceryl transferase from Bacillus cereus (strain ATCC 14579 / DSM 31 / CCUG 7414 / JCM 2152 / NBRC 15305 / NCIMB 9373 / NCTC 2599 / NRRL B-3711).